The primary structure comprises 89 residues: Small ribosomal subunit protein uS15 (89 aa).

It belongs to the universal ribosomal protein uS15 family. As to quaternary structure, part of the 30S ribosomal subunit. Forms a bridge to the 50S subunit in the 70S ribosome, contacting the 23S rRNA.

One of the primary rRNA binding proteins, it binds directly to 16S rRNA where it helps nucleate assembly of the platform of the 30S subunit by binding and bridging several RNA helices of the 16S rRNA. Functionally, forms an intersubunit bridge (bridge B4) with the 23S rRNA of the 50S subunit in the ribosome. The sequence is that of Small ribosomal subunit protein uS15 from Chlamydia abortus (strain DSM 27085 / S26/3) (Chlamydophila abortus).